Consider the following 117-residue polypeptide: Anti-sigma F factor antagonist (117 aa).

Positions 3–113 (LGIDMNVKES…QSEQQALLTL (111 aa)) constitute an STAS domain. S58 bears the Phosphoserine mark.

This sequence belongs to the anti-sigma-factor antagonist family. Phosphorylated by SpoIIAB on a serine residue.

In terms of biological role, in the phosphorylated form it could act as an anti-anti-sigma factor that counteracts SpoIIAB and thus releases sigma f from inhibition. This Bacillus subtilis (strain 168) protein is Anti-sigma F factor antagonist (spoIIAA).